Reading from the N-terminus, the 90-residue chain is MQVEEMQEKVINLAQKYTNQKRFFRLIRKSNIAEKIIKEISEFYGIREDNIELFDNEIEFMFKKESVKLILKKQGNKLKIENIEMTKSIS.

This is an uncharacterized protein from Saccharolobus islandicus (Sulfolobus islandicus).